The following is a 49-amino-acid chain: MRDKVILECTECKSRNYTTKKNKKLHPDRVETNKYCKFCKKHTLHKETR.

It belongs to the bacterial ribosomal protein bL33 family.

The chain is Large ribosomal subunit protein bL33 from Finegoldia magna (strain ATCC 29328 / DSM 20472 / WAL 2508) (Peptostreptococcus magnus).